Consider the following 72-residue polypeptide: MGMRMMFTVFLLVVLATTVVSFPSDRASDGRDDEAKDERSDMHESDRNGRGCCCNPACGPNYGCGTSCSRTL.

The N-terminal stretch at 1-21 (MGMRMMFTVFLLVVLATTVVS) is a signal peptide. Residues 22–50 (FPSDRASDGRDDEAKDERSDMHESDRNGR) constitute a propeptide that is removed on maturation. The segment at 23 to 51 (PSDRASDGRDDEAKDERSDMHESDRNGRG) is disordered. The segment covering 26 to 49 (RASDGRDDEAKDERSDMHESDRNG) has biased composition (basic and acidic residues). 3 disulfides stabilise this stretch: cysteine 52–cysteine 68, cysteine 53–cysteine 58, and cysteine 54–cysteine 64. A propeptide spanning residues 70 to 72 (RTL) is cleaved from the precursor.

It belongs to the conotoxin A superfamily. The disulfide bond Cys-52-Cys-68 (Cys I-VI), which corresponds to an extra disulfide bond when compared to the cysteine framework I (CC-C-C), does contribute to conotoxin SII stability and imparts a unique binding mode at the nAChR. Expressed by the venom duct.

The protein localises to the secreted. Its function is as follows. Alpha-conotoxins act on postsynaptic membranes, they bind to the nicotinic acetylcholine receptors (nAChR) and thus inhibit them. This toxin potently inhibits the rodent muscle nAChR (IC(50)=120 nM (adult subtype, alpha-1-beta-1-delta-epsilon/CHRNA1-CHRNB1-CHRND-CHRNE) and IC(50)=370 nM (fetal subtype, alpha-1-beta-1-gamma-delta/CHRNA1-CHRNB1-CHRNG-CHRND)) and weakly inhibits neuronal nAChRs. In contrast to alpha-conotoxins bearing 2 disulfide bonds (framework I), this conotoxin acts via a unique binding mode with the helix and the N- and C-termini buried in the binding pocket of muscle nAChRs. The sequence is that of Alpha-conotoxin SII from Conus striatus (Striated cone).